Here is a 165-residue protein sequence, read N- to C-terminus: Thiol peroxidase (165 aa).

In terms of domain architecture, Thioredoxin spans 18–164; that stretch reads RKVGDKAPNF…YEAAIEAAKK (147 aa). Cys-60 serves as the catalytic Cysteine sulfenic acid (-SOH) intermediate. Cys-60 and Cys-94 form a disulfide bridge.

This sequence belongs to the peroxiredoxin family. Tpx subfamily. In terms of assembly, homodimer.

The enzyme catalyses a hydroperoxide + [thioredoxin]-dithiol = an alcohol + [thioredoxin]-disulfide + H2O. Functionally, thiol-specific peroxidase that catalyzes the reduction of hydrogen peroxide and organic hydroperoxides to water and alcohols, respectively. Plays a role in cell protection against oxidative stress by detoxifying peroxides. The polypeptide is Thiol peroxidase (Listeria monocytogenes serotype 4b (strain F2365)).